The primary structure comprises 153 residues: Nucleoside diphosphate kinase (153 aa).

Residues K13, F61, R89, T95, R106, and N116 each coordinate ATP. The active-site Pros-phosphohistidine intermediate is the H119.

It belongs to the NDK family. Mg(2+) is required as a cofactor. Highest levels in the liver and kidney with lower levels in the heart, brain and breast muscle.

The protein localises to the cytoplasm. It is found in the cell membrane. It catalyses the reaction a 2'-deoxyribonucleoside 5'-diphosphate + ATP = a 2'-deoxyribonucleoside 5'-triphosphate + ADP. The catalysed reaction is a ribonucleoside 5'-diphosphate + ATP = a ribonucleoside 5'-triphosphate + ADP. Functionally, major role in the synthesis of nucleoside triphosphates other than ATP. The ATP gamma phosphate is transferred to the NDP beta phosphate via a ping-pong mechanism, using a phosphorylated active-site intermediate. The chain is Nucleoside diphosphate kinase from Columba livia (Rock dove).